The primary structure comprises 317 residues: UV DNA damage endonuclease (317 aa).

This sequence belongs to the uve1/UvsE family.

Functionally, component in a DNA repair pathway. Removal of UV LIGHT damaged nucleotides. Recognizes pyrimidine dimers and cleave a phosphodiester bond immediately 5' to the lesion. The sequence is that of UV DNA damage endonuclease from Bacillus thuringiensis subsp. konkukian (strain 97-27).